The primary structure comprises 146 residues: Peptide methionine sulfoxide reductase MsrB (146 aa).

The 124-residue stretch at 2-125 (LKKNKDELND…NSAAVQFIPY (124 aa)) folds into the MsrB domain. The active-site Nucleophile is cysteine 114.

It belongs to the MsrB Met sulfoxide reductase family.

The catalysed reaction is L-methionyl-[protein] + [thioredoxin]-disulfide + H2O = L-methionyl-(R)-S-oxide-[protein] + [thioredoxin]-dithiol. This chain is Peptide methionine sulfoxide reductase MsrB, found in Staphylococcus carnosus (strain TM300).